The sequence spans 92 residues: Probable Fe(2+)-trafficking protein (92 aa).

Belongs to the Fe(2+)-trafficking protein family.

Could be a mediator in iron transactions between iron acquisition and iron-requiring processes, such as synthesis and/or repair of Fe-S clusters in biosynthetic enzymes. The sequence is that of Probable Fe(2+)-trafficking protein from Shewanella loihica (strain ATCC BAA-1088 / PV-4).